The primary structure comprises 293 residues: Elongation factor Ts (293 aa).

The involved in Mg(2+) ion dislocation from EF-Tu stretch occupies residues 79 to 82; the sequence is TDFV.

This sequence belongs to the EF-Ts family.

It localises to the cytoplasm. Its function is as follows. Associates with the EF-Tu.GDP complex and induces the exchange of GDP to GTP. It remains bound to the aminoacyl-tRNA.EF-Tu.GTP complex up to the GTP hydrolysis stage on the ribosome. The polypeptide is Elongation factor Ts (Bacillus velezensis (strain DSM 23117 / BGSC 10A6 / LMG 26770 / FZB42) (Bacillus amyloliquefaciens subsp. plantarum)).